We begin with the raw amino-acid sequence, 204 residues long: ATP-dependent Clp protease proteolytic subunit (204 aa).

Serine 101 serves as the catalytic Nucleophile. Histidine 126 is an active-site residue.

It belongs to the peptidase S14 family. Fourteen ClpP subunits assemble into 2 heptameric rings which stack back to back to give a disk-like structure with a central cavity, resembling the structure of eukaryotic proteasomes.

Its subcellular location is the cytoplasm. It catalyses the reaction Hydrolysis of proteins to small peptides in the presence of ATP and magnesium. alpha-casein is the usual test substrate. In the absence of ATP, only oligopeptides shorter than five residues are hydrolyzed (such as succinyl-Leu-Tyr-|-NHMec, and Leu-Tyr-Leu-|-Tyr-Trp, in which cleavage of the -Tyr-|-Leu- and -Tyr-|-Trp bonds also occurs).. In terms of biological role, cleaves peptides in various proteins in a process that requires ATP hydrolysis. Has a chymotrypsin-like activity. Plays a major role in the degradation of misfolded proteins. The polypeptide is ATP-dependent Clp protease proteolytic subunit (Deinococcus radiodurans (strain ATCC 13939 / DSM 20539 / JCM 16871 / CCUG 27074 / LMG 4051 / NBRC 15346 / NCIMB 9279 / VKM B-1422 / R1)).